The sequence spans 257 residues: uncharacterized protein (257 aa).

This is an uncharacterized protein from Dictyostelium discoideum (Social amoeba).